A 276-amino-acid polypeptide reads, in one-letter code: MIKIGSHVRFRKPDYLFGAIQESLENKANTAMIFLGPPQSTFRVKPENYKLQDYQKHFFKQIPPEDIIVHAPYIINPASPIKAQFSNDFLVKEIEKINYIGAKFLVLHPGFFTSFTKEVAKKQLISSLKSILEKTKNVILLLETMSGKGSEMCANFEEIVEIVEAVESPRIGICLDTCHVWDAGYDLKNFPEFCKEIRRTRLINYLKVIHLNDSLSPLGSKKDRHANIGKGFIGLESLRKIIFDPLFANIPKILETPYVDNKPIYDQEIALLLKKV.

Zn(2+)-binding residues include H70, H108, E143, D176, H179, H210, D223, H225, and E255.

The protein belongs to the AP endonuclease 2 family. Zn(2+) is required as a cofactor.

It carries out the reaction Endonucleolytic cleavage to 5'-phosphooligonucleotide end-products.. In terms of biological role, endonuclease IV plays a role in DNA repair. It cleaves phosphodiester bonds at apurinic or apyrimidinic (AP) sites, generating a 3'-hydroxyl group and a 5'-terminal sugar phosphate. In Mesomycoplasma hyopneumoniae (strain J / ATCC 25934 / NCTC 10110) (Mycoplasma hyopneumoniae), this protein is Probable endonuclease 4.